A 456-amino-acid chain; its full sequence is uncharacterized protein (456 aa).

Helical transmembrane passes span 12-32, 63-83, 86-106, 143-163, 179-199, 208-228, 237-257, 305-325, 348-368, 390-410, and 414-434; these read SFIW…YLTL, FAAL…VGVA, VQAG…LGMA, WLAK…IGTF, IPVL…ILGG, SVIV…IILL, ILLI…AVGL, FLDT…TGAW, IGAT…ILGW, LAYI…IWII, and VNGL…KVII.

Belongs to the alanine or glycine:cation symporter (AGCS) (TC 2.A.25) family.

The protein resides in the cell inner membrane. This is an uncharacterized protein from Haemophilus influenzae (strain ATCC 51907 / DSM 11121 / KW20 / Rd).